The primary structure comprises 705 residues: CAP-Gly domain-containing linker protein 4 (705 aa).

3 ANK repeats span residues 65-101 (TSVSELFAILRQWVPQVQQNIDIIGNEILKRGCNVND), 149-180 (TNMNALHYAAYFDVPELIRVILKTSKPKDVDA), and 186-215 (NFGTALHIAAYNLCAGAVKCLLEQGANPAF). The region spanning 303–345 (GTTEFASGQWAGIELDEPEGKNNGSVGKVQYFKCAPKYGIFAP) is the CAP-Gly 1 domain. 2 disordered regions span residues 391 to 410 (MTSKKDSASESTLSLPPGEE) and 431 to 479 (TSSL…ANNS). Residues 441–452 (PKKQNAISSNKK) show a composition bias toward polar residues. The segment covering 455–479 (SKSPSLSSRASAGLNSSATSTANNS) has biased composition (low complexity). In terms of domain architecture, CAP-Gly 2 spans 505-547 (GTTNFAPGYWYGIELEKPHGKNDGSVGGVQYFSCSPRYGIFAP). 2 positions are modified to phosphoserine: serine 557 and serine 609. Residues 644 to 686 (GPTDFASGIWLGLELRSAKGKNDGSVGDKRYFTCKPNHGVLVR) form the CAP-Gly 3 domain.

This chain is CAP-Gly domain-containing linker protein 4 (CLIP4), found in Homo sapiens (Human).